Here is a 388-residue protein sequence, read N- to C-terminus: Probable E3 ubiquitin-protein ligase LOG2 (388 aa).

Positions 1–43 are disordered; it reads MGNISSSGGEGRRRRRRNHTAAPPPPPPPPSSSLPPPPLPTEI. Gly-2 is lipidated: N-myristoyl glycine. A compositionally biased stretch (pro residues) spans 22–40; it reads APPPPPPPPSSSLPPPPLP. The interval 159–281 is DAR2 domain; sequence FTFDATVSGR…GEIKIRVVKQ (123 aa). An RING-type; atypical zinc finger spans residues 319 to 358; that stretch reads CVICLSEPRDTTVLPCRHMCMCSGCAKVLRFQTNRCPICR. Positions 368 to 388 are disordered; sequence KVHGNNGSGNNTGQGETVEQE.

Belongs to the RING-type zinc finger family. LOG2 subfamily. In terms of assembly, interacts with GDU1. Myristoylated (in vitro). Expressed in the vascular tissues in both phloem and xylem parenchyma cells.

The protein resides in the cell membrane. It catalyses the reaction S-ubiquitinyl-[E2 ubiquitin-conjugating enzyme]-L-cysteine + [acceptor protein]-L-lysine = [E2 ubiquitin-conjugating enzyme]-L-cysteine + N(6)-ubiquitinyl-[acceptor protein]-L-lysine.. It functions in the pathway protein modification; protein ubiquitination. Acts as an E3 ubiquitin-protein ligase, or as part of E3 complex, which accepts ubiquitin from specific E2 ubiquitin-conjugating enzymes and then transfers it to substrates (in vitro). Required for GLUTAMINE DUMPER 1(GDU1)-induced amino acid secretion and for amino acid homeostasis. Ubiquitinates GDU1 (in vitro). This Arabidopsis thaliana (Mouse-ear cress) protein is Probable E3 ubiquitin-protein ligase LOG2 (LOG2).